A 436-amino-acid polypeptide reads, in one-letter code: G2/mitotic-specific cyclin-B (436 aa).

The span at 1–17 shows a compositional bias: polar residues; sequence MSTINNPLNIKTRSHSS. The interval 1-33 is disordered; it reads MSTINNPLNIKTRSHSSMGGGMIMDENKVPKSS.

It belongs to the cyclin family. Cyclin AB subfamily. Interacts with the cdk1 protein kinase to form a serine/threonine kinase holoenzyme complex also known as maturation promoting factor (MPF). The cyclin subunit imparts substrate specificity to the complex.

In terms of biological role, essential for the control of the cell cycle at the G2/M (mitosis) transition. This is G2/mitotic-specific cyclin-B (cycB) from Dictyostelium discoideum (Social amoeba).